Consider the following 403-residue polypeptide: Phosphopentomutase 2 (403 aa).

6 residues coordinate Mn(2+): Asp13, Asp298, His303, Asp339, His340, and His351.

This sequence belongs to the phosphopentomutase family. The cofactor is Mn(2+).

It is found in the cytoplasm. It carries out the reaction 2-deoxy-alpha-D-ribose 1-phosphate = 2-deoxy-D-ribose 5-phosphate. It catalyses the reaction alpha-D-ribose 1-phosphate = D-ribose 5-phosphate. Its pathway is carbohydrate degradation; 2-deoxy-D-ribose 1-phosphate degradation; D-glyceraldehyde 3-phosphate and acetaldehyde from 2-deoxy-alpha-D-ribose 1-phosphate: step 1/2. Its function is as follows. Isomerase that catalyzes the conversion of deoxy-ribose 1-phosphate (dRib-1-P) and ribose 1-phosphate (Rib-1-P) to deoxy-ribose 5-phosphate (dRib-5-P) and ribose 5-phosphate (Rib-5-P), respectively. The protein is Phosphopentomutase 2 of Streptococcus agalactiae serotype Ia (strain ATCC 27591 / A909 / CDC SS700).